A 694-amino-acid chain; its full sequence is NADPH--cytochrome P450 reductase (694 aa).

At 1–8 the chain is on the lumenal side; sequence MAQLDTLD. A helical membrane pass occupies residues 9–31; sequence LVVLAVLLVGSVAYFTKGTYWAV. The Cytoplasmic portion of the chain corresponds to 32 to 694; the sequence is AKDPYASTGP…RGRYQEDVWS (663 aa). One can recognise a Flavodoxin-like domain in the interval 66–220; that stretch reads CVIFYGSQTG…DFLAWKEPMW (155 aa). FMN-binding positions include 72–77, 123–126, 168–177, and Asp-203; these read SQTGTA, ATYG, and LGNNTYEHYN. The 262-residue stretch at 276–537 folds into the FAD-binding FR-type domain; it reads HNPFIAPIAE…HVRHSNFKLP (262 aa). Arg-295 serves as a coordination point for NADP(+). FAD is bound by residues 450–453, 468–470, and 485–488; these read RYYS, TAV, and GVTT. Residues Thr-551, 613–614, 619–623, and Glu-655 contribute to the NADP(+) site; these read SR and KVYVQ. Trp-693 provides a ligand contact to FAD.

This sequence belongs to the NADPH--cytochrome P450 reductase family. The protein in the N-terminal section; belongs to the flavodoxin family. In the C-terminal section; belongs to the flavoprotein pyridine nucleotide cytochrome reductase family. The cofactor is FAD. Requires FMN as cofactor.

It is found in the endoplasmic reticulum membrane. The protein resides in the mitochondrion outer membrane. It localises to the cell membrane. It catalyses the reaction 2 oxidized [cytochrome P450] + NADPH = 2 reduced [cytochrome P450] + NADP(+) + H(+). In terms of biological role, this enzyme is required for electron transfer from NADP to cytochrome P450 in microsomes. It can also provide electron transfer to heme oxygenase and cytochrome B5. Involved in ergosterol biosynthesis. The chain is NADPH--cytochrome P450 reductase from Aspergillus niger.